The primary structure comprises 440 residues: Tubby-like F-box protein 13 (440 aa).

Residues 51–106 form the F-box domain; the sequence is SCWASLPPELLRDIIERLEESEATWPSRKHVVACAGVCRTWREMCKEIVKNPELCG.

It belongs to the TUB family. As to expression, ubiquitous.

The polypeptide is Tubby-like F-box protein 13 (TULP13) (Oryza sativa subsp. japonica (Rice)).